We begin with the raw amino-acid sequence, 195 residues long: Large ribosomal subunit protein mL58 (195 aa).

The transit peptide at 1-18 (MIGRGVCCRSFHTAGSAW) directs the protein to the mitochondrion.

This sequence belongs to the mitochondrion-specific ribosomal protein mL58 family. Component of the mitochondrial large ribosomal subunit (mt-LSU). Mature yeast 74S mitochondrial ribosomes consist of a small (37S) and a large (54S) subunit. The 37S small subunit contains a 15S ribosomal RNA (15S mt-rRNA) and 34 different proteins. The 54S large subunit contains a 21S rRNA (21S mt-rRNA) and 46 different proteins.

It is found in the mitochondrion. Component of the mitochondrial ribosome (mitoribosome), a dedicated translation machinery responsible for the synthesis of mitochondrial genome-encoded proteins, including at least some of the essential transmembrane subunits of the mitochondrial respiratory chain. The mitoribosomes are attached to the mitochondrial inner membrane and translation products are cotranslationally integrated into the membrane. The protein is Large ribosomal subunit protein mL58 (MRPL20) of Saccharomyces cerevisiae (strain ATCC 204508 / S288c) (Baker's yeast).